The following is a 462-amino-acid chain: Cysteine--tRNA ligase (462 aa).

Cysteine 24 is a binding site for Zn(2+). Residues proline 26–histidine 36 carry the 'HIGH' region motif. Zn(2+)-binding residues include cysteine 199, histidine 224, and glutamate 228. The 'KMSKS' region motif lies at lysine 256–serine 260. Lysine 259 lines the ATP pocket.

It belongs to the class-I aminoacyl-tRNA synthetase family. In terms of assembly, monomer. Requires Zn(2+) as cofactor.

It localises to the cytoplasm. The catalysed reaction is tRNA(Cys) + L-cysteine + ATP = L-cysteinyl-tRNA(Cys) + AMP + diphosphate. In Campylobacter jejuni subsp. jejuni serotype O:23/36 (strain 81-176), this protein is Cysteine--tRNA ligase.